The following is a 220-amino-acid chain: Dual specificity phosphatase 29 (220 aa).

Positions 1–15 (MTSGEVKTSLKNAYS) are enriched in polar residues. The disordered stretch occupies residues 1 to 29 (MTSGEVKTSLKNAYSSAKRLSPKMEEEGE). The 149-residue stretch at 54 to 202 (HVNEVWPKLY…LRELDKQLVQ (149 aa)) folds into the Tyrosine-protein phosphatase domain. 146-153 (HCVMGRSR) provides a ligand contact to substrate. Cys147 functions as the Phosphocysteine intermediate in the catalytic mechanism.

It belongs to the protein-tyrosine phosphatase family. Non-receptor class dual specificity subfamily. As to quaternary structure, homodimer. Interacts with PRKAA2.

It localises to the cytoplasm. The protein localises to the nucleus. It catalyses the reaction O-phospho-L-tyrosyl-[protein] + H2O = L-tyrosyl-[protein] + phosphate. The catalysed reaction is O-phospho-L-seryl-[protein] + H2O = L-seryl-[protein] + phosphate. It carries out the reaction O-phospho-L-threonyl-[protein] + H2O = L-threonyl-[protein] + phosphate. In terms of biological role, dual specificity phosphatase able to dephosphorylate phosphotyrosine, phosphoserine and phosphothreonine residues within the same substrate, with a preference for phosphotyrosine as a substrate. Involved in the modulation of intracellular signaling cascades. In skeletal muscle regulates systemic glucose homeostasis by activating, AMPK, an energy sensor protein kinase. Affects MAP kinase signaling though modulation of the MAPK1/2 cascade in skeletal muscle promoting muscle cell differentiation, development and atrophy. The protein is Dual specificity phosphatase 29 of Homo sapiens (Human).